A 309-amino-acid chain; its full sequence is tRNA dimethylallyltransferase 1 (309 aa).

An ATP-binding site is contributed by 14–21 (GPTASGKS). 16-21 (TASGKS) contributes to the substrate binding site. Residues 39-42 (DSMQ) are interaction with substrate tRNA.

This sequence belongs to the IPP transferase family. As to quaternary structure, monomer. Mg(2+) serves as cofactor.

The enzyme catalyses adenosine(37) in tRNA + dimethylallyl diphosphate = N(6)-dimethylallyladenosine(37) in tRNA + diphosphate. Its function is as follows. Catalyzes the transfer of a dimethylallyl group onto the adenine at position 37 in tRNAs that read codons beginning with uridine, leading to the formation of N6-(dimethylallyl)adenosine (i(6)A). This Pelobacter propionicus (strain DSM 2379 / NBRC 103807 / OttBd1) protein is tRNA dimethylallyltransferase 1.